Reading from the N-terminus, the 273-residue chain is Large ribosomal subunit protein uL2 (273 aa).

2 disordered regions span residues Lys-28–His-53 and Arg-221–Lys-273. The span at Lys-39–Arg-48 shows a compositional bias: low complexity.

It belongs to the universal ribosomal protein uL2 family. Part of the 50S ribosomal subunit. Forms a bridge to the 30S subunit in the 70S ribosome.

Its function is as follows. One of the primary rRNA binding proteins. Required for association of the 30S and 50S subunits to form the 70S ribosome, for tRNA binding and peptide bond formation. It has been suggested to have peptidyltransferase activity; this is somewhat controversial. Makes several contacts with the 16S rRNA in the 70S ribosome. This chain is Large ribosomal subunit protein uL2, found in Salmonella agona (strain SL483).